The chain runs to 191 residues: Shikimate kinase (191 aa).

Residue 24 to 29 (GSGKTS) coordinates ATP. T28 serves as a coordination point for Mg(2+). Residues D46, R70, and G92 each contribute to the substrate site. Residue R130 coordinates ATP. R149 provides a ligand contact to substrate.

Belongs to the shikimate kinase family. As to quaternary structure, monomer. The cofactor is Mg(2+).

The protein resides in the cytoplasm. The catalysed reaction is shikimate + ATP = 3-phosphoshikimate + ADP + H(+). The protein operates within metabolic intermediate biosynthesis; chorismate biosynthesis; chorismate from D-erythrose 4-phosphate and phosphoenolpyruvate: step 5/7. Its function is as follows. Catalyzes the specific phosphorylation of the 3-hydroxyl group of shikimic acid using ATP as a cosubstrate. This is Shikimate kinase from Synechococcus sp. (strain CC9902).